The primary structure comprises 367 residues: HTH-type transcriptional regulator GbdR (367 aa).

The HTH araC/xylS-type domain maps to 227 to 325 (QEIVALMEAN…GIPPRDERQG (99 aa)). 2 consecutive DNA-binding regions (H-T-H motif) follow at residues 244–265 (DELA…QKYL) and 292–315 (IIEV…REYF).

Functionally, specific regulator of choline metabolism, which activates transcription of at least 25 genes from 11 promoters in response to choline metabolites. Required for the induction of plcH, encoding the phospholipase C, and pchP, encoding the phosphorylcholine phosphatase, in response to glycine betaine (GB) and dimethylglycine (DMG). Also controls the expression of gbcAB and dgcAB, which are required for GB and DMG degradation, respectively, in response to both GB and DMG. The GbdR regulon also includes genes encoding sarcosine, glycine and serine catabolic enzymes, the BetX and CbcXWV quaternary amine transport proteins and the acetylcholine esterase gene, choE. Acts by binding directly to the promoter region of the genes. May play an important role during P.aeruginosa interactions with eukaryotes. This is HTH-type transcriptional regulator GbdR from Pseudomonas aeruginosa (strain UCBPP-PA14).